Consider the following 775-residue polypeptide: 5-methyltetrahydropteroyltriglutamate--homocysteine methyltransferase (775 aa).

Residues 15–18 (RELK) and K118 each bind 5-methyltetrahydropteroyltri-L-glutamate. L-homocysteine is bound by residues 448–450 (IGS) and E501. Residues 448–450 (IGS) and E501 contribute to the L-methionine site. Residues 532 to 533 (RC) and W578 contribute to the 5-methyltetrahydropteroyltri-L-glutamate site. D616 contacts L-homocysteine. Residue D616 coordinates L-methionine. 5-methyltetrahydropteroyltri-L-glutamate is bound at residue E622. 3 residues coordinate Zn(2+): H658, C660, and E682. The active-site Proton donor is H711. Position 743 (C743) interacts with Zn(2+).

The protein belongs to the vitamin-B12 independent methionine synthase family. Requires Zn(2+) as cofactor.

The enzyme catalyses 5-methyltetrahydropteroyltri-L-glutamate + L-homocysteine = tetrahydropteroyltri-L-glutamate + L-methionine. It participates in amino-acid biosynthesis; L-methionine biosynthesis via de novo pathway; L-methionine from L-homocysteine (MetE route): step 1/1. In terms of biological role, catalyzes the transfer of a methyl group from 5-methyltetrahydrofolate to homocysteine resulting in methionine formation. This is 5-methyltetrahydropteroyltriglutamate--homocysteine methyltransferase from Cytophaga hutchinsonii (strain ATCC 33406 / DSM 1761 / CIP 103989 / NBRC 15051 / NCIMB 9469 / D465).